A 159-amino-acid polypeptide reads, in one-letter code: 2-C-methyl-D-erythritol 2,4-cyclodiphosphate synthase (159 aa).

Positions 8 and 10 each coordinate a divalent metal cation. 4-CDP-2-C-methyl-D-erythritol 2-phosphate contacts are provided by residues 8–10 (DVH) and 34–35 (HS). His42 serves as a coordination point for a divalent metal cation. Residues 56–58 (DIG), 61–65 (FPDTD), 100–106 (AQAPKML), 132–135 (TTTE), Phe139, and Arg142 each bind 4-CDP-2-C-methyl-D-erythritol 2-phosphate.

The protein belongs to the IspF family. As to quaternary structure, homotrimer. The cofactor is a divalent metal cation.

The catalysed reaction is 4-CDP-2-C-methyl-D-erythritol 2-phosphate = 2-C-methyl-D-erythritol 2,4-cyclic diphosphate + CMP. It participates in isoprenoid biosynthesis; isopentenyl diphosphate biosynthesis via DXP pathway; isopentenyl diphosphate from 1-deoxy-D-xylulose 5-phosphate: step 4/6. Functionally, involved in the biosynthesis of isopentenyl diphosphate (IPP) and dimethylallyl diphosphate (DMAPP), two major building blocks of isoprenoid compounds. Catalyzes the conversion of 4-diphosphocytidyl-2-C-methyl-D-erythritol 2-phosphate (CDP-ME2P) to 2-C-methyl-D-erythritol 2,4-cyclodiphosphate (ME-CPP) with a corresponding release of cytidine 5-monophosphate (CMP). The protein is 2-C-methyl-D-erythritol 2,4-cyclodiphosphate synthase of Escherichia coli O139:H28 (strain E24377A / ETEC).